The sequence spans 360 residues: Phospho-N-acetylmuramoyl-pentapeptide-transferase (360 aa).

Topologically, residues 1-25 (MLVWLAEHLVKYYSGFNVFSYLTFR) are periplasmic. The chain crosses the membrane as a helical span at residues 26-46 (AIVSLLTALFISLWMGPRMIA). Residues 47–71 (RLQKLSFGQVVRNDGPESHFSKRGT) are Cytoplasmic-facing. The chain crosses the membrane as a helical span at residues 72-92 (PTMGGIMILTAIVISVLLWAY). Residue Pro-93 is a topological domain, periplasmic. The chain crosses the membrane as a helical span at residues 94 to 114 (SNPYVWCVLVVLIGYGIIGFV). Residues 115 to 131 (DDYRKVVRKDTKGLIAR) lie on the Cytoplasmic side of the membrane. Residues 132–152 (WKYFWMSVIALGVAFALYLVG) form a helical membrane-spanning segment. Over 153–167 (KDTPVTQLVVPFFKD) the chain is Periplasmic. Residues 168–188 (VMPQLGLFYILLSYFVIVGTG) traverse the membrane as a helical segment. At 189–198 (NAVNLTDGLD) the chain is on the cytoplasmic side. A helical membrane pass occupies residues 199-219 (GLAIMPTVFVAAGFALVAWAT). The Periplasmic segment spans residues 220–235 (GNMNFANYLHIPYLRH). Residues 236 to 256 (AGELVIVCTAIVGAGLGFLWF) traverse the membrane as a helical segment. Residues 257-262 (NTYPAQ) are Cytoplasmic-facing. Residues 263–283 (VFMGDVGSLALGGALGIIAVL) form a helical membrane-spanning segment. The Periplasmic portion of the chain corresponds to 284 to 287 (LRQE). A helical transmembrane segment spans residues 288 to 308 (FLLVIMGGVFVVETLSVILQV). Residues 309–337 (GSFKLRGQRIFRMAPIHHHYELKGWPEPR) lie on the Cytoplasmic side of the membrane. The chain crosses the membrane as a helical span at residues 338–358 (VIVRFWIISLMLVLIGLATLK). Over 359-360 (VR) the chain is Periplasmic.

This sequence belongs to the glycosyltransferase 4 family. MraY subfamily. It depends on Mg(2+) as a cofactor.

It is found in the cell inner membrane. It catalyses the reaction UDP-N-acetyl-alpha-D-muramoyl-L-alanyl-gamma-D-glutamyl-meso-2,6-diaminopimeloyl-D-alanyl-D-alanine + di-trans,octa-cis-undecaprenyl phosphate = di-trans,octa-cis-undecaprenyl diphospho-N-acetyl-alpha-D-muramoyl-L-alanyl-D-glutamyl-meso-2,6-diaminopimeloyl-D-alanyl-D-alanine + UMP. It functions in the pathway cell wall biogenesis; peptidoglycan biosynthesis. In terms of biological role, catalyzes the initial step of the lipid cycle reactions in the biosynthesis of the cell wall peptidoglycan: transfers peptidoglycan precursor phospho-MurNAc-pentapeptide from UDP-MurNAc-pentapeptide onto the lipid carrier undecaprenyl phosphate, yielding undecaprenyl-pyrophosphoryl-MurNAc-pentapeptide, known as lipid I. In Salmonella paratyphi C (strain RKS4594), this protein is Phospho-N-acetylmuramoyl-pentapeptide-transferase.